Consider the following 90-residue polypeptide: UPF0729 protein Bm1_03610 (90 aa).

This sequence belongs to the UPF0729 family.

The protein is UPF0729 protein Bm1_03610 of Brugia malayi (Filarial nematode worm).